The sequence spans 276 residues: NH(3)-dependent NAD(+) synthetase (276 aa).

ATP is bound at residue 47-54 (GISGGQDS). Residue aspartate 53 participates in Mg(2+) binding. A deamido-NAD(+)-binding site is contributed by arginine 141. Residue threonine 161 participates in ATP binding. Glutamate 166 contacts Mg(2+). 2 residues coordinate deamido-NAD(+): lysine 174 and aspartate 181. ATP contacts are provided by lysine 190 and threonine 212. 261–262 (HK) contributes to the deamido-NAD(+) binding site.

The protein belongs to the NAD synthetase family. As to quaternary structure, homodimer.

The enzyme catalyses deamido-NAD(+) + NH4(+) + ATP = AMP + diphosphate + NAD(+) + H(+). The protein operates within cofactor biosynthesis; NAD(+) biosynthesis; NAD(+) from deamido-NAD(+) (ammonia route): step 1/1. In terms of biological role, catalyzes the ATP-dependent amidation of deamido-NAD to form NAD. Uses ammonia as a nitrogen source. The polypeptide is NH(3)-dependent NAD(+) synthetase (Levilactobacillus brevis (strain ATCC 367 / BCRC 12310 / CIP 105137 / JCM 1170 / LMG 11437 / NCIMB 947 / NCTC 947) (Lactobacillus brevis)).